The sequence spans 590 residues: Aspartate--tRNA(Asp/Asn) ligase (590 aa).

L-aspartate is bound at residue Glu176. The segment at 200–203 is aspartate; the sequence is QLFK. The L-aspartate site is built by Arg222 and His451. 222–224 provides a ligand contact to ATP; that stretch reads RDE. Glu485 contacts ATP. Arg492 is an L-aspartate binding site. 537 to 540 lines the ATP pocket; the sequence is GIDR.

This sequence belongs to the class-II aminoacyl-tRNA synthetase family. Type 1 subfamily. Homodimer.

The protein resides in the cytoplasm. It carries out the reaction tRNA(Asx) + L-aspartate + ATP = L-aspartyl-tRNA(Asx) + AMP + diphosphate. Its function is as follows. Aspartyl-tRNA synthetase with relaxed tRNA specificity since it is able to aspartylate not only its cognate tRNA(Asp) but also tRNA(Asn). Reaction proceeds in two steps: L-aspartate is first activated by ATP to form Asp-AMP and then transferred to the acceptor end of tRNA(Asp/Asn). The sequence is that of Aspartate--tRNA(Asp/Asn) ligase from Ehrlichia chaffeensis (strain ATCC CRL-10679 / Arkansas).